A 363-amino-acid chain; its full sequence is Ly6/PLAUR domain-containing protein 3 (363 aa).

An N-terminal signal peptide occupies residues 1 to 32 (MDAARRGDTQPVMWTTGWLLLLPLLLCEGAQA). Residues 35–128 (CYSCVQKADD…LNLTLRGLNP (94 aa)) form the UPAR/Ly6 1 domain. N-linked (GlcNAc...) asparagine glycans are attached at residues asparagine 120, asparagine 131, asparagine 178, and asparagine 185. A UPAR/Ly6 2 domain is found at 142–224 (CYSCVGLSRE…GSCCQGPRCN (83 aa)). Residues 238-248 (PPLVLLPPPTT) show a composition bias toward pro residues. Disordered stretches follow at residues 238 to 287 (PPLV…TSPH) and 301 to 336 (LSGG…GGAQ). Residues 249–278 (AAPSTRAQNSSSTTSTAAPTTTTSIIKPTT) show a composition bias toward low complexity. The segment covering 304-318 (GAAGHGGTAGHGGAA) has biased composition (gly residues). Basic and acidic residues predominate over residues 320–330 (HQDRSNMEKYP). Serine 343 is lipidated: GPI-anchor amidated serine. Residues 344–363 (GTLGSWLSAVLLTVVAGAML) constitute a propeptide, removed in mature form.

Binds laminin-1 and laminin-5. Interacts with LGALS3. Interacts with AGR2 and AGR3.

The protein localises to the cell membrane. Functionally, supports cell migration. May be involved in tumor progression. The polypeptide is Ly6/PLAUR domain-containing protein 3 (Lypd3) (Mus musculus (Mouse)).